Here is a 399-residue protein sequence, read N- to C-terminus: Argininosuccinate synthase (399 aa).

ATP contacts are provided by residues 10–18 and Ala38; that span reads AYSGGVDTS. Tyr89 provides a ligand contact to L-citrulline. Residue Gly119 participates in ATP binding. Positions 121, 125, and 126 each coordinate L-aspartate. Residue Asn125 participates in L-citrulline binding. L-citrulline is bound by residues Arg129, Ser177, Ser186, Glu262, and Tyr274.

The protein belongs to the argininosuccinate synthase family. Type 1 subfamily. In terms of assembly, homotetramer.

Its subcellular location is the cytoplasm. The enzyme catalyses L-citrulline + L-aspartate + ATP = 2-(N(omega)-L-arginino)succinate + AMP + diphosphate + H(+). It participates in amino-acid biosynthesis; L-arginine biosynthesis; L-arginine from L-ornithine and carbamoyl phosphate: step 2/3. The chain is Argininosuccinate synthase from Rippkaea orientalis (strain PCC 8801 / RF-1) (Cyanothece sp. (strain PCC 8801)).